The chain runs to 146 residues: 3-dehydroquinate dehydratase (146 aa).

The Proton acceptor role is filled by tyrosine 22. Residues asparagine 73, histidine 79, and aspartate 86 each coordinate substrate. Residue histidine 101 is the Proton donor of the active site. Substrate is bound by residues 102-103 and arginine 112; that span reads IS.

Belongs to the type-II 3-dehydroquinase family. Homododecamer.

The catalysed reaction is 3-dehydroquinate = 3-dehydroshikimate + H2O. Its pathway is metabolic intermediate biosynthesis; chorismate biosynthesis; chorismate from D-erythrose 4-phosphate and phosphoenolpyruvate: step 3/7. Functionally, catalyzes a trans-dehydration via an enolate intermediate. In Corynebacterium pseudotuberculosis (strain C231), this protein is 3-dehydroquinate dehydratase (aroQ).